The sequence spans 406 residues: Imidazolonepropionase (406 aa).

The Fe(3+) site is built by His65 and His67. Zn(2+) contacts are provided by His65 and His67. Positions 74, 137, and 170 each coordinate 4-imidazolone-5-propanoate. Tyr137 serves as a coordination point for N-formimidoyl-L-glutamate. His235 lines the Fe(3+) pocket. Zn(2+) is bound at residue His235. Gln238 is a binding site for 4-imidazolone-5-propanoate. Residue Asp310 coordinates Fe(3+). Residue Asp310 participates in Zn(2+) binding. Residues Asn312 and Gly314 each contribute to the N-formimidoyl-L-glutamate site. Thr315 is a binding site for 4-imidazolone-5-propanoate.

This sequence belongs to the metallo-dependent hydrolases superfamily. HutI family. Zn(2+) serves as cofactor. It depends on Fe(3+) as a cofactor.

The protein resides in the cytoplasm. The enzyme catalyses 4-imidazolone-5-propanoate + H2O = N-formimidoyl-L-glutamate. The protein operates within amino-acid degradation; L-histidine degradation into L-glutamate; N-formimidoyl-L-glutamate from L-histidine: step 3/3. Catalyzes the hydrolytic cleavage of the carbon-nitrogen bond in imidazolone-5-propanoate to yield N-formimidoyl-L-glutamate. It is the third step in the universal histidine degradation pathway. The polypeptide is Imidazolonepropionase (Vibrio vulnificus (strain CMCP6)).